The primary structure comprises 128 residues: Small ribosomal subunit protein bS6 (128 aa).

Belongs to the bacterial ribosomal protein bS6 family.

Its function is as follows. Binds together with bS18 to 16S ribosomal RNA. This chain is Small ribosomal subunit protein bS6, found in Thermotoga sp. (strain RQ2).